The following is a 7182-amino-acid chain: Replicase polyprotein 1ab (7182 aa).

Residues 54–174 (YDNHVKIDCR…HKWFQFCRLY (121 aa)) form the CoV Nsp1 globular domain. The BetaCoV Nsp1 C-terminal domain maps to 192–222 (FSVEDAYAEVHAEPKGKYSQKAYALLRQYRG). Positions 226-488 (VLFVDQYGCD…LITHALYLDY (263 aa)) constitute a CoV Nsp2 N-terminal domain. 4 residues coordinate Zn(2+): Cys365, Cys370, Cys386, and Cys389. Residues 365–389 (CFNDNCDFYGWVSGNMMDGFSCPLC) form a C4 region. The 189-residue stretch at 493-681 (CGNLEQNHIL…VNKFYTFFKL (189 aa)) folds into the CoV Nsp2 middle domain. One can recognise a CoV Nsp2 C-terminal domain in the interval 697 to 809 (LKTINGLVCI…LDQAWRFPCA (113 aa)). One can recognise a Ubiquitin-like 1 domain in the interval 811–923 (RKVNFNEKPV…MYCTFAIEDV (113 aa)). Repeat copies occupy residues 945–954 (NDDEDVVTGD), 955–964 (NDDEDVVTGD), 965–974 (NDDEDVVTGD), 975–984 (NDDEDVVTGD), 985–994 (NDDEDVVTGD), 995–1004 (NDDEDVVTGD), 1005–1014 (NDDEDVVTGD), 1015–1024 (NDDEDVVTGD), 1025–1034 (NDDEDVVTGD), 1035–1044 (NDDEDVVTGD), 1045–1054 (NDDEDVVTGD), 1055–1064 (NDDEDVVTGD), 1065–1074 (NDDEDVVTGD), and 1075–1084 (NDDEDVVTGD). The tract at residues 945–1084 (NDDEDVVTGD…NDDEDVVTGD (140 aa)) is 14 X 10 AA tandem repeat of N-[DN]-D-E-D-V-V-T-G-D. The tract at residues 946–1064 (DDEDVVTGDN…NDDEDVVTGD (119 aa)) is disordered. One can recognise a Peptidase C16 1 domain in the interval 1123–1373 (VFNDVYNDAL…VCFVKGDIIN (251 aa)). Cys1161 functions as the For PL1-PRO activity in the catalytic mechanism. Zn(2+) is bound by residues Cys1238, Cys1241, Cys1264, and Cys1266. The C4-type 1 zinc finger occupies 1238–1266 (CLKCGFSFDLNGLDALFFYGDIVSHVCKC). Residues His1312 and Asp1323 each act as for PL1-PRO activity in the active site. In terms of domain architecture, Macro spans 1351-1522 (ELPQLYGLCI…IIQKCQITSV (172 aa)). The DPUP domain occupies 1578-1649 (NDVRDYLLSK…TVNQVCVLLA (72 aa)). A Ubiquitin-like 2 domain is found at 1649–1704 (AKKIDVLLTVDGVNFKSISLTVGEVFGKILGNVFCDGIDVTKLKCSDFYADKILYQ). The 261-residue stretch at 1718 to 1978 (SSFGFDQQQL…MVAYNPDLSQ (261 aa)) folds into the Peptidase C16 2 domain. The For PL2-PRO activity role is filled by Cys1757. Residues Cys1835, Cys1837, Cys1869, and Cys1871 each coordinate Zn(2+). The C4-type 2 zinc-finger motif lies at 1835 to 1871 (CDCGIKQESRVGVDAVMHFGTLAKTDLFNGYKIGCNC). Active-site for PL2-PRO activity residues include His1914 and Asp1928. Residues 1992-2093 (IKAQFKPFAK…TYFNKPSFKS (102 aa)) form the Nucleic acid-binding domain. One can recognise a G2M domain in the interval 2108-2257 (ESQGNVVTSV…NDKTIFYTTE (150 aa)). Helical transmembrane passes span 2226-2246 (AIEF…LLHF), 2287-2307 (FLVV…NVIF), and 2318-2338 (FPIF…LVTI). The segment at 2226–2463 (AIEFYGFLKW…FVLLRFYIVV (238 aa)) is HD1. One can recognise a 3Ecto domain in the interval 2323–2384 (GRIVMWIKAT…AIDFVQYEVD (62 aa)). 2 disulfides stabilise this stretch: Cys2339/Cys2363 and Cys2354/Cys2360. Transmembrane regions (helical) follow at residues 2401-2421 (LVIG…LIGL) and 2443-2463 (FIVF…YIVV). Residues 2471–2561 (GFIRHIVYGC…ELKRPVNPTD (91 aa)) are Y1. A CoV Nsp3 Y domain is found at 2471-2838 (GFIRHIVYGC…LTTPFSLKGG (368 aa)). 8 residues coordinate Zn(2+): His2475, Cys2480, Cys2485, Cys2488, Cys2521, His2524, Cys2528, and Cys2531. Positions 2475-2488 (HIVYGCNKAGCLFC) are ZF1. Residues 2521–2531 (CVKHQWNCFNC) form a ZF2 region. Residues 2562 to 2654 (ASHYVVTDIK…LVDKKLITTA (93 aa)) are Y2. Residues 2562 to 2838 (ASHYVVTDIK…LTTPFSLKGG (277 aa)) form a coV-Y region. A Y3 region spans residues 2655–2737 (CNGISVTQTM…KSMISAVAAG (83 aa)). A Y4 region spans residues 2738 to 2838 (LEFTDENYNN…LTTPFSLKGG (101 aa)). Helical transmembrane passes span 2844–2864 (LLYI…ALLP), 3119–3139 (ASSI…YYLI), 3151–3171 (VVVI…VFQV), 3178–3198 (VYAC…SVIM), and 3203–3223 (IVMY…AMVI). Residues 2844 to 3223 (LLYILFFVSL…FCVTYVAMVI (380 aa)) are HD2. Residues 3237–3334 (IGVNVCSDST…TASVSTSFLQ (98 aa)) enclose the Nsp4C domain. Residues 3335–3637 (SGIVKMVSPT…YQQLAGVKLQ (303 aa)) enclose the Peptidase C30 domain. Residues His3375 and Cys3479 each act as for 3CL-PRO activity in the active site. 7 consecutive transmembrane segments (helical) span residues 3651–3671 (ILIS…WTIF), 3676–3696 (THMI…MLLV), 3701–3721 (FYLT…NYLV), 3744–3764 (FTYV…IFIT), 3772–3792 (IFSL…WYFG), 3800–3820 (LLFI…SLAI), and 3843–3863 (LILL…GFFS). Positions 3651–3863 (ILISTFLFSC…ILSCYWGFFS (213 aa)) are HD3. The region spanning 3925–4013 (SKLTDVKCAN…DYVQDSTVLQ (89 aa)) is the RdRp Nsp7 cofactor domain. Residues 4014–4210 (ALQSEFVNMA…YNEVANAVMQ (197 aa)) enclose the RdRp Nsp8 cofactor domain. Residues 4211 to 4320 (NNELMPHKLK…GTLSSTIRLQ (110 aa)) enclose the Nsp9 ssRNA-binding domain. Residues 4321 to 4458 (AGVATEYAAN…CVGSSVAVQS (138 aa)) enclose the ExoN/MTase coactivator domain. Zn(2+)-binding residues include Cys4394, Cys4397, His4403, Cys4410, Cys4436, Cys4439, Cys4447, and Cys4449. Zinc fingers lie at residues 4394–4410 (CIYC…DGIC) and 4436–4449 (CQVC…SCSC). Residues 4463–4718 (FLNRVRGTSV…DCELFVNDSY (256 aa)) form the NiRAN domain. Mn(2+)-binding residues include Asn4666 and Asp4675. The Nsp12 Interface domain occupies 4719 to 4817 (RQFDLVQYDF…MNLDVDTHRY (99 aa)). Residues His4748, Cys4754, Cys4759, Cys4763, and Cys4940 each coordinate Zn(2+). The Nsp12 RNA-dependent RNA polymerase domain maps to 4818–5385 (RLSLKDLLLY…NMYLKSAVMQ (568 aa)). The tract at residues 4820-5034 (SLKDLLLYAA…HQKCLKSIAA (215 aa)) is rdRp Fingers N-ter. The tract at residues 5035–5073 (TRGVPVVIGTTKFYGGWDDMLRHLIKDVDNPVLMGWDYP) is rdRp Palm N-ter. Residues 5065–5227 (PVLMGWDYPK…CYNSDYASKG (163 aa)) enclose the RdRp catalytic domain. The interval 5074–5132 (KCDRAMPNILRIVSSLVLARKHEFCCSHGDRFYRLANECAQVLSEIVMCGGCYYVKPGG) is rdRp Fingers C-ter. Zn(2+)-binding residues include His5095, Cys5098, and Cys5099. A rdRp Palm C-ter region spans residues 5133 to 5268 (TSSGDATTAF…TNGPHEFCSQ (136 aa)). Residues Ser5212, Asp5213, and Asp5214 contribute to the active site. Residues 5269–5385 (HTMLVKIDGD…NMYLKSAVMQ (117 aa)) form a rdRp Thumb region. Residues 5386-5498 (SVGACVVCSS…DDFNKIASCK (113 aa)) form the CV ZBD domain. Residues Cys5390, Cys5393, Cys5401, Cys5404, Cys5411, Cys5414, His5418, His5424, Cys5435, Cys5440, Cys5457, and His5460 each contribute to the Zn(2+) site. The (+)RNA virus helicase ATP-binding domain maps to 5641 to 5822 (SVPLVFQNNV…MCCLGPDIFL (182 aa)). Position 5666 to 5673 (5666 to 5673 (GPPGTGKS)) interacts with ATP. In terms of domain architecture, (+)RNA virus helicase C-terminal spans 5823–5992 (GNCYRCPKEI…TLPRLHCTTN (170 aa)). The ExoN domain occupies 6059–6274 (LFITKDEAIK…RCLAIYDCFC (216 aa)). Catalysis depends on residues Asp6077, Glu6079, and Glu6178. The Zn(2+) site is built by Cys6194, Cys6197, Cys6213, His6216, His6244, Cys6248, and His6251. Catalysis depends on residues His6255 and Asp6260. Cys6266 lines the Zn(2+) pocket. The N7-MTase domain occupies 6283–6509 (YPIISNEVSI…NLWNTFTTLQ (227 aa)). An S-adenosyl-L-methionine-binding site is contributed by 6318–6324 (DIGNPKG). The interval 6396–6410 (CNGGSLYVNKHAFHT) is gpppA-binding. 4 residues coordinate Zn(2+): Cys6434, Cys6455, Cys6466, and His6469. Residues 6510 to 6570 (SLENVIYNLV…NIAVELFTKR (61 aa)) enclose the Nsp15 N-terminal oligomerization domain. The 121-residue stretch at 6571–6691 (SIRHHPELKI…FAMRKDGDDV (121 aa)) folds into the AV-Nsp11N/CoV-Nsp15M domain. In terms of domain architecture, NendoU spans 6741–6880 (EPRSDLERDF…NDNKIMTFYP (140 aa)). Catalysis depends on residues His6771, His6786, Lys6826, Lys6929, Asp7013, Lys7053, and Glu7086. In terms of domain architecture, Nidovirus-type SAM-dependent 2'-O-MTase spans 6885–7179 (TNDWKPGYSM…KEIFVGDSLV (295 aa)).

The protein belongs to the coronaviruses polyprotein 1ab family. In terms of assembly, interacts with host PHB and PHB2. Interacts with papain-like protease nsp3 and non-structural protein 6. As to quaternary structure, monomer. Homodimer. Only the homodimer shows catalytic activity. In terms of assembly, interacts with nsp8 and nsp12 to form the replication-transcription complex (RTC): nsp12, nsp7, two subunits of nsp8, and up to two subunits of nsp13. Interacts with nsp7, nsp13 and nsp12 to form the replication-transcription complex (RTC): nsp12, nsp7, two subunits of nsp8, and up to two subunits of nsp13. As to quaternary structure, interacts with nsp12. In terms of assembly, interacts with proofreading exoribonuclease nsp14 and 2'-O-methyltransferase nsp16; these interactions enhance nsp14 and nsp16 enzymatic activities. Interacts with nsp7 and nsp8 to form the replication-transcription complex (RTC): nsp12, nsp7, two subunits of nsp8, and up to two subunits of nsp13. Interacts with nsp9. As to quaternary structure, interacts with nsp8 to form the replication-transcription complex (RTC): nsp12, nsp7, two subunits of nsp8, and up to two subunits of nsp13. It depends on Mn(2+) as a cofactor. Requires Mg(2+) as cofactor. Specific enzymatic cleavages in vivo by its own proteases yield mature proteins. 3CL-PRO and PL-PRO proteinases are autocatalytically processed.

The protein resides in the host membrane. Its subcellular location is the host cytoplasm. It localises to the host perinuclear region. The protein localises to the host endoplasmic reticulum-Golgi intermediate compartment. It catalyses the reaction RNA(n) + a ribonucleoside 5'-triphosphate = RNA(n+1) + diphosphate. The enzyme catalyses ATP + H2O = ADP + phosphate + H(+). It carries out the reaction Thiol-dependent hydrolysis of ester, thioester, amide, peptide and isopeptide bonds formed by the C-terminal Gly of ubiquitin (a 76-residue protein attached to proteins as an intracellular targeting signal).. The catalysed reaction is a 5'-end (N(7)-methyl 5'-triphosphoguanosine)-ribonucleoside in mRNA + S-adenosyl-L-methionine = a 5'-end (N(7)-methyl 5'-triphosphoguanosine)-(2'-O-methyl-ribonucleoside) in mRNA + S-adenosyl-L-homocysteine + H(+). It catalyses the reaction uridylyl-uridylyl-ribonucleotide-RNA = a 3'-end uridylyl-2',3'-cyclophospho-uridine-RNA + a 5'-end dephospho-ribonucleoside-RNA. The enzyme catalyses a 5'-end diphospho-ribonucleoside in mRNA + GTP + H(+) = a 5'-end (5'-triphosphoguanosine)-ribonucleoside in mRNA + diphosphate. It carries out the reaction a 5'-end (5'-triphosphoguanosine)-ribonucleoside in mRNA + S-adenosyl-L-methionine = a 5'-end (N(7)-methyl 5'-triphosphoguanosine)-ribonucleoside in mRNA + S-adenosyl-L-homocysteine. Its function is as follows. The replicase polyprotein of coronaviruses is a multifunctional protein: it contains the activities necessary for the transcription of negative stranded RNA, leader RNA, subgenomic mRNAs and progeny virion RNA as well as proteinases responsible for the cleavage of the polyprotein into functional products. In terms of biological role, inhibits host translation by interacting with the 40S ribosomal subunit. The nsp1-40S ribosome complex further induces an endonucleolytic cleavage near the 5'UTR of host mRNAs, targeting them for degradation. Viral mRNAs are not susceptible to nsp1-mediated endonucleolytic RNA cleavage thanks to the presence of a 5'-end leader sequence and are therefore protected from degradation. By suppressing host gene expression, nsp1 facilitates efficient viral gene expression in infected cells and evasion from host immune response. Functionally, may play a role in the modulation of host cell survival signaling pathway by interacting with host PHB and PHB2. Indeed, these two proteins play a role in maintaining the functional integrity of the mitochondria and protecting cells from various stresses. Responsible for the cleavages located at the N-terminus of the replicase polyprotein. In addition, PL-PRO possesses a deubiquitinating/deISGylating activity and processes both 'Lys-48'- and 'Lys-63'-linked polyubiquitin chains from cellular substrates. Participates together with nsp4 in the assembly of virally-induced cytoplasmic double-membrane vesicles necessary for viral replication. Antagonizes innate immune induction of type I interferon by blocking the phosphorylation, dimerization and subsequent nuclear translocation of host IRF3. Also prevents host NF-kappa-B signaling. Its function is as follows. Participates in the assembly of virally-induced cytoplasmic double-membrane vesicles necessary for viral replication. In terms of biological role, cleaves the C-terminus of replicase polyprotein at 11 sites. Recognizes substrates containing the core sequence [ILMVF]-Q-|-[SGACN]. Also able to bind an ADP-ribose-1''-phosphate (ADRP). Functionally, plays a role in the initial induction of autophagosomes from host endoplasmic reticulum. Later, limits the expansion of these phagosomes that are no longer able to deliver viral components to lysosomes. Forms a hexadecamer with nsp8 (8 subunits of each) that may participate in viral replication by acting as a primase. Alternatively, may synthesize substantially longer products than oligonucleotide primers. Its function is as follows. Forms a hexadecamer with nsp7 (8 subunits of each) that may participate in viral replication by acting as a primase. Alternatively, may synthesize substantially longer products than oligonucleotide primers. In terms of biological role, forms a primer, NSP9-pU, which is utilized by the polymerase for the initiation of RNA chains. Interacts with ribosome signal recognition particle RNA (SRP). Together with NSP8, suppress protein integration into the cell membrane, thereby disrupting host immune defenses. Functionally, plays a pivotal role in viral transcription by stimulating both nsp14 3'-5' exoribonuclease and nsp16 2'-O-methyltransferase activities. Therefore plays an essential role in viral mRNAs cap methylation. RNA-directed RNA polymerase that catalyzes the transcription of viral genomic and subgenomic RNAs. Acts in complex with nsp7 and nsp8 to transcribe both the minus and positive strands of genomic RNA. The kinase-like NiRAN domain of NSP12 attaches one or more nucleotides to the amino terminus of NSP9, forming a covalent RNA-protein intermediate that serves as transcription/replication primer. Subgenomic RNAs (sgRNAs) are formed by discontinuous transcription: The polymerase has the ability to pause at transcription-regulating sequences (TRS) and jump to the leader TRS, resulting in a major deletion. This creates a series of subgenomic RNAs that are replicated, transcribed and translated. In addition, Nsp12 is a subunit of the viral RNA capping enzyme that catalyzes the RNA guanylyltransferase reaction for genomic and sub-genomic RNAs. Subsequently, the NiRAN domain transfers RNA to GDP, and forms the core cap structure GpppA-RNA. Its function is as follows. Multi-functional protein with a zinc-binding domain in N-terminus displaying RNA and DNA duplex-unwinding activities with 5' to 3' polarity. Activity of helicase is dependent on magnesium. In terms of biological role, plays a role in viral RNA synthesis through two distinct activities. The N7-guanine methyltransferase activity plays a role in the formation of the cap structure GpppA-RNA. The proofreading exoribonuclease reduces the sensitivity of the virus to RNA mutagens during replication. This activity acts on both ssRNA and dsRNA in a 3'-5' direction. Functionally, plays a role in viral transcription/replication and prevents the simultaneous activation of host cell dsRNA sensors, such as MDA5/IFIH1, OAS, and PKR. Acts by degrading the 5'-polyuridines generated during replication of the poly(A) region of viral genomic and subgenomic RNAs. Catalyzes a two-step reaction in which a 2'3'-cyclic phosphate (2'3'-cP) is first generated by 2'-O transesterification, which is then hydrolyzed to a 3'-phosphate (3'-P). If not degraded, poly(U) RNA would hybridize with poly(A) RNA tails and activate host dsRNA sensors. Methyltransferase that mediates mRNA cap 2'-O-ribose methylation to the 5'-cap structure of viral mRNAs. N7-methyl guanosine cap is a prerequisite for binding of nsp16. Therefore plays an essential role in viral mRNAs cap methylation which is essential to evade immune system. The chain is Replicase polyprotein 1ab (rep) from Human coronavirus HKU1 (isolate N1) (HCoV-HKU1).